The chain runs to 314 residues: Epithelial-stromal interaction protein 1 (314 aa).

Disordered stretches follow at residues 1 to 72, 200 to 219, 225 to 267, and 292 to 314; these read MYPR…PNET, NRSA…WKLP, PSRA…HQEE, and SQPG…GWGI. Residues 43 to 58 are compositionally biased toward basic and acidic residues; it reads AEPKGPKLERQGHGDQ. Residues 71–180 are a coiled coil; that stretch reads ETRRQKIQRI…QEDIRRATLR (110 aa). The span at 232 to 267 shows a compositional bias: basic and acidic residues; that stretch reads AHKDSPQKEDNQKLQKTRDGHQKNKLLETKGQHQEE. Positions 305 to 314 are enriched in polar residues; the sequence is NMNSTDGWGI.

In terms of biological role, plays a role in M1 macrophage polarization and is required for the proper regulation of gene expression during M1 versus M2 macrophage differentiation. Might play a role in RELA/p65 and STAT1 phosphorylation and nuclear localization upon activation of macrophages. The chain is Epithelial-stromal interaction protein 1 (Epsti1) from Rattus norvegicus (Rat).